The chain runs to 318 residues: Aspartate carbamoyltransferase catalytic subunit (318 aa).

Positions 64 and 65 each coordinate carbamoyl phosphate. Residue lysine 92 participates in L-aspartate binding. Carbamoyl phosphate contacts are provided by arginine 114, histidine 142, and glutamine 145. Residues arginine 175 and arginine 229 each coordinate L-aspartate. The carbamoyl phosphate site is built by glycine 270 and proline 271.

It belongs to the aspartate/ornithine carbamoyltransferase superfamily. ATCase family. As to quaternary structure, heterododecamer (2C3:3R2) of six catalytic PyrB chains organized as two trimers (C3), and six regulatory PyrI chains organized as three dimers (R2).

It carries out the reaction carbamoyl phosphate + L-aspartate = N-carbamoyl-L-aspartate + phosphate + H(+). Its pathway is pyrimidine metabolism; UMP biosynthesis via de novo pathway; (S)-dihydroorotate from bicarbonate: step 2/3. Functionally, catalyzes the condensation of carbamoyl phosphate and aspartate to form carbamoyl aspartate and inorganic phosphate, the committed step in the de novo pyrimidine nucleotide biosynthesis pathway. In Rhodospirillum centenum (strain ATCC 51521 / SW), this protein is Aspartate carbamoyltransferase catalytic subunit.